The primary structure comprises 238 residues: DNA repair protein RecO (238 aa).

This sequence belongs to the RecO family.

Involved in DNA repair and RecF pathway recombination. This Anaplasma marginale (strain Florida) protein is DNA repair protein RecO.